A 691-amino-acid polypeptide reads, in one-letter code: Kinetochore protein NDC80 (691 aa).

Residues 1-95 are disordered; sequence MQSSTSTDQH…LNDKSNSRNS (95 aa). Residues 10-19 are compositionally biased toward basic and acidic residues; the sequence is HVLHHMDPHR. Over residues 20-42 the composition is skewed to polar residues; sequence FTSQIPTATSSQLRRRNSTNQGL. Thr38 bears the Phosphothreonine mark. Residues 54 to 65 show a composition bias toward low complexity; that stretch reads TISGTGIPTGGI. Position 248 is a phosphothreonine (Thr248). 2 coiled-coil regions span residues 376 to 446 and 522 to 686; these read GKLE…SIKS and KKSI…FETE.

It belongs to the NDC80/HEC1 family. In terms of assembly, component of the NDC80 complex, which consists of NDC80, NUF2, SPC24 and SPC25. The NDC80 complex is formed by two subcomplexes, NDC80-NUF2 and SPC24-SPC25, which are joined end-to-end through their coiled-coil domains. It has a rod-like structure with a length of 570 Angstroms and globular domains at either end. The NDC80-NUF2 globular domains are probably directed to microtubules, the SPC24-SPC25 globular domains to the centromere. NDC80 probably interacts with SMC1 and SMC2. Also interacts with KIN3. Interacts with DMC1.

It is found in the nucleus. The protein resides in the chromosome. The protein localises to the centromere. It localises to the kinetochore. In terms of biological role, acts as a component of the essential kinetochore-associated NDC80 complex, which is involved in chromosome segregation and spindle checkpoint activity. The chain is Kinetochore protein NDC80 from Saccharomyces cerevisiae (strain ATCC 204508 / S288c) (Baker's yeast).